The following is a 238-amino-acid chain: Sugar fermentation stimulation protein homolog (238 aa).

This sequence belongs to the SfsA family.

The sequence is that of Sugar fermentation stimulation protein homolog from Shewanella denitrificans (strain OS217 / ATCC BAA-1090 / DSM 15013).